Here is a 649-residue protein sequence, read N- to C-terminus: Serine/threonine-protein kinase par-4 (649 aa).

The segment covering 1–11 (MEGPSSSSVPT) has biased composition (polar residues). The interval 1–132 (MEGPSSSSVP…DEEAETPEEQ (132 aa)) is disordered. Basic and acidic residues predominate over residues 45-55 (NTEKMEKEKKP). Composition is skewed to acidic residues over residues 64–77 (PDYD…GSCE) and 117–129 (DDME…AETP). Residues 197-460 (YLWGGIIGTG…ISDVMQHPWF (264 aa)) form the Protein kinase domain. ATP contacts are provided by residues 203 to 211 (IGTGSYGKV) and lysine 226. Aspartate 324 (proton acceptor) is an active-site residue. The interval 548–649 (TLEKRPGDGP…CIFRSRTDSS (102 aa)) is disordered. Over residues 597–609 (AVEVVEAVAAPEA) the composition is skewed to low complexity.

The protein belongs to the protein kinase superfamily. CAMK Ser/Thr protein kinase family. LKB1 subfamily. Requires Mg(2+) as cofactor. The cofactor is Mn(2+).

Its subcellular location is the cytoplasm. It is found in the cell cortex. It catalyses the reaction L-seryl-[protein] + ATP = O-phospho-L-seryl-[protein] + ADP + H(+). The enzyme catalyses L-threonyl-[protein] + ATP = O-phospho-L-threonyl-[protein] + ADP + H(+). Its function is as follows. Required for cytoplasmic partitioning and asymmetric cell division in early embryogenesis. Phosphorylates and restricts the asymmetry effectors mex-5 and mex-6 to the anterior cytoplasm of the zygote and maintains these phosphorylations until fertilization. Phosphorylates and regulates aak-2 in response to oxidative stress. May also play a role in motility, behavioral response, regulation of lifespan and dauer formation through this pathway. This is Serine/threonine-protein kinase par-4 from Caenorhabditis briggsae.